Reading from the N-terminus, the 313-residue chain is Carbamate kinase (313 aa).

It belongs to the carbamate kinase family.

The protein resides in the cytoplasm. The enzyme catalyses hydrogencarbonate + NH4(+) + ATP = carbamoyl phosphate + ADP + H2O + H(+). The protein operates within metabolic intermediate metabolism; carbamoyl phosphate degradation; CO(2) and NH(3) from carbamoyl phosphate: step 1/1. The protein is Carbamate kinase (arcC) of Oenococcus oeni (Leuconostoc oenos).